The following is a 433-amino-acid chain: tRNA modification GTPase MnmE (433 aa).

(6S)-5-formyl-5,6,7,8-tetrahydrofolate-binding residues include Arg24, Glu86, and Lys125. The TrmE-type G domain occupies 218–363 (GARLALIGAP…LKEALREALL (146 aa)). Asn228 is a K(+) binding site. Residues 228–233 (NAGKSS), 247–253 (SPIPGTT), and 272–275 (DTAG) contribute to the GTP site. Mg(2+) is bound at residue Ser232. Positions 247, 249, and 252 each coordinate K(+). Thr253 provides a ligand contact to Mg(2+). Residue Lys433 coordinates (6S)-5-formyl-5,6,7,8-tetrahydrofolate.

The protein belongs to the TRAFAC class TrmE-Era-EngA-EngB-Septin-like GTPase superfamily. TrmE GTPase family. In terms of assembly, homodimer. Heterotetramer of two MnmE and two MnmG subunits. K(+) is required as a cofactor.

It is found in the cytoplasm. Its function is as follows. Exhibits a very high intrinsic GTPase hydrolysis rate. Involved in the addition of a carboxymethylaminomethyl (cmnm) group at the wobble position (U34) of certain tRNAs, forming tRNA-cmnm(5)s(2)U34. The polypeptide is tRNA modification GTPase MnmE (Thermus thermophilus (strain ATCC BAA-163 / DSM 7039 / HB27)).